Here is a 507-residue protein sequence, read N- to C-terminus: Cobyric acid synthase (507 aa).

Residues R273–V468 form the GATase cobBQ-type domain. The active-site Nucleophile is the C354. Residue H460 is part of the active site.

This sequence belongs to the CobB/CobQ family. CobQ subfamily.

It participates in cofactor biosynthesis; adenosylcobalamin biosynthesis. Its function is as follows. Catalyzes amidations at positions B, D, E, and G on adenosylcobyrinic A,C-diamide. NH(2) groups are provided by glutamine, and one molecule of ATP is hydrogenolyzed for each amidation. The polypeptide is Cobyric acid synthase (Polaromonas sp. (strain JS666 / ATCC BAA-500)).